The primary structure comprises 239 residues: MGSCQAGHYLHFCLAHHPPLVCATLILLLLGLSGLGLGGFLLTHRTDLRSPDIPQDWVSFLRSFGQLTLCPVNGTVTGKGRGSHIVGLLTTLNFGDGPDRNKTQTFQAQVQGSRMGLKGSFARELVLVTARVTTERTPGTCLYFSAIPEILPSSQPPIPCSEEGAGNATLSPRMSEECVGVWSHEGLVLTKLLTSEELTLCGSRLLVLGFFLILFCGLCCLTAACFHPRRESHWSRTRL.

The signal sequence occupies residues methionine 1 to glycine 38. Residues glycine 39–leucine 205 lie on the Extracellular side of the membrane. 2 N-linked (GlcNAc...) asparagine glycosylation sites follow: asparagine 101 and asparagine 167. The chain crosses the membrane as a helical span at residues leucine 206 to phenylalanine 226. Over histidine 227–leucine 239 the chain is Cytoplasmic.

In terms of assembly, interacts with IGFBP3. Interacts with CASP8.

It localises to the cell membrane. Cell death receptor specific for IGFBP3, may mediate caspase-8-dependent apoptosis upon ligand binding. In Bos taurus (Bovine), this protein is Insulin-like growth factor-binding protein 3 receptor (TMEM219).